The following is a 220-amino-acid chain: Peptide methionine sulfoxide reductase MsrA (220 aa).

C54 is a catalytic residue.

This sequence belongs to the MsrA Met sulfoxide reductase family.

The enzyme catalyses L-methionyl-[protein] + [thioredoxin]-disulfide + H2O = L-methionyl-(S)-S-oxide-[protein] + [thioredoxin]-dithiol. It carries out the reaction [thioredoxin]-disulfide + L-methionine + H2O = L-methionine (S)-S-oxide + [thioredoxin]-dithiol. Functionally, has an important function as a repair enzyme for proteins that have been inactivated by oxidation. Catalyzes the reversible oxidation-reduction of methionine sulfoxide in proteins to methionine. The polypeptide is Peptide methionine sulfoxide reductase MsrA (Salinispora arenicola (strain CNS-205)).